The chain runs to 323 residues: Transmembrane protein 171 (323 aa).

4 helical membrane passes run 22–42 (IFFL…ISIF), 57–77 (MVLK…VILA), 112–132 (LIFG…GIWV), and 159–179 (FLSL…FFVV). Residues 251–268 (YSSLFNLSRTPTPENQGA) are compositionally biased toward polar residues. The disordered stretch occupies residues 251–323 (YSSLFNLSRT…LGAPSESSPP (73 aa)). Over residues 281–290 (SGPGSSSESS) the composition is skewed to low complexity.

It localises to the membrane. In Rattus norvegicus (Rat), this protein is Transmembrane protein 171 (Tmem171).